A 372-amino-acid chain; its full sequence is MSRSAASSVGSITGESPQKKLLQSASSSSSLAILHDEIAVSCFARVPRCYYPAISLVCRNFRRLMASPEIYIERSVIRRTENILYVAIRSEATKTLSWYTLNLKPFGTTEISHRLVPVPSFPSIPGYGTTIISSGSETYVIGGCIDGELVSTVSVIDCRSHTCRFLPNMKEPRKCAAVGLIDGKLYVVGGCNAPSLSWVEVFNFKKRTWESVLSLDNVDMDEQMNFFVMNDKIYRIGQNTMFVYDPKKGRFEEDLALGRLWFNESCPIDNVLYGFYCMNQILAYDLVVGMGTVFWGLEGLPEGLQSCTGRMVNHGGRLAILFKKSPTEIWRTEIAIERAEEGGYISGKFLWSNHVLTLTDSFIIERALAVTV.

One can recognise an F-box domain in the interval 34–74 (LHDEIAVSCFARVPRCYYPAISLVCRNFRRLMASPEIYIER). 3 Kelch repeats span residues 137–183 (ETYV…LIDG), 184–229 (KLYV…FFVM), and 232–280 (KIYR…CMNQ).

This is F-box/kelch-repeat protein At4g14905 from Arabidopsis thaliana (Mouse-ear cress).